We begin with the raw amino-acid sequence, 286 residues long: MANYPKELPAQTQSRQPGIESEMNPSPVYEYEDYKGADKLKGKVALITGGDSGIGRAVSVAYAKEGADIAIVYKDEHEDAEETKKRVEQEGVKCLLIAGDVGEEEFCNEAVEKTVKELGGLDILVNNAGEQHPKESIKDITSEQLHRTFKTNFYSQFYLTKKAIDYLKPGSAIINTTSINPYVGNPTLIDYTATKGAINAFTRTMAQALVKDGIRVNAVAPGPIWTPLIPATFPEETVAQFGQDTPMGRPGQPVEHVGCYVLLASDESSYMTGQTLHVNGGNFVTT.

A disordered region spans residues 1–26 (MANYPKELPAQTQSRQPGIESEMNPS). 46-70 (LITGGDSGIGRAVSVAYAKEGADIA) contributes to the NAD(+) binding site. Serine 178 serves as a coordination point for substrate. Tyrosine 191 serves as the catalytic Proton acceptor.

Belongs to the short-chain dehydrogenases/reductases (SDR) family.

This chain is General stress protein 39 (ydaD), found in Bacillus subtilis (strain 168).